The sequence spans 291 residues: MTQVLKFGIPKGSLQDATIALFKRCGWKINVNGRSYFPDINDPDISCALLRAQEMARNVEHGTLDAGLTGKDWIAENNSDVHVVADLVYSKASARPARWVIAVAKDSPIQKLEDLEGKTVSTELVNYTKRFFQEKKISVNVEFSWGATEAKVVSGLADAIVEITETESTIRAHSLRIIHEMMQTHTQLIANHDAWKDPFKKAKLEQIALLLKGALLGEKLVGLKMNVPHAGLDAIVNLLPSLNAPTVAPLYQSDWFAVETVVDSETVRDLIPELMAKGAQGIIEYPLNKVI.

It belongs to the ATP phosphoribosyltransferase family. Long subfamily. Mg(2+) serves as cofactor.

The protein resides in the cytoplasm. The catalysed reaction is 1-(5-phospho-beta-D-ribosyl)-ATP + diphosphate = 5-phospho-alpha-D-ribose 1-diphosphate + ATP. The protein operates within amino-acid biosynthesis; L-histidine biosynthesis; L-histidine from 5-phospho-alpha-D-ribose 1-diphosphate: step 1/9. Its activity is regulated as follows. Feedback inhibited by histidine. Catalyzes the condensation of ATP and 5-phosphoribose 1-diphosphate to form N'-(5'-phosphoribosyl)-ATP (PR-ATP). Has a crucial role in the pathway because the rate of histidine biosynthesis seems to be controlled primarily by regulation of HisG enzymatic activity. The polypeptide is ATP phosphoribosyltransferase (Desulfosudis oleivorans (strain DSM 6200 / JCM 39069 / Hxd3) (Desulfococcus oleovorans)).